Here is a 489-residue protein sequence, read N- to C-terminus: Betaine aldehyde dehydrogenase (489 aa).

K(+) contacts are provided by threonine 26 and aspartate 93. Residue 150 to 152 (GAW) coordinates NAD(+). Lysine 162 functions as the Charge relay system in the catalytic mechanism. An NAD(+)-binding site is contributed by 176 to 179 (KPSE). Residue valine 180 coordinates K(+). 229 to 232 (GVET) contributes to the NAD(+) binding site. Leucine 245 lines the K(+) pocket. The active-site Proton acceptor is glutamate 251. 3 residues coordinate NAD(+): glycine 253, cysteine 285, and glutamate 386. Cysteine 285 serves as the catalytic Nucleophile. Position 285 is a cysteine sulfenic acid (-SOH) (cysteine 285). Residues lysine 456 and glycine 459 each contribute to the K(+) site. The Charge relay system role is filled by glutamate 463.

The protein belongs to the aldehyde dehydrogenase family. Dimer of dimers. It depends on K(+) as a cofactor.

The enzyme catalyses betaine aldehyde + NAD(+) + H2O = glycine betaine + NADH + 2 H(+). It functions in the pathway amine and polyamine biosynthesis; betaine biosynthesis via choline pathway; betaine from betaine aldehyde: step 1/1. Functionally, involved in the biosynthesis of the osmoprotectant glycine betaine. Catalyzes the irreversible oxidation of betaine aldehyde to the corresponding acid. The protein is Betaine aldehyde dehydrogenase of Burkholderia pseudomallei (strain 668).